We begin with the raw amino-acid sequence, 200 residues long: Recombination protein RecR (200 aa).

The C4-type zinc-finger motif lies at 58–75; the sequence is CPLCFTLKESKEADCHFC. Positions 82 to 177 constitute a Toprim domain; the sequence is QSLCIVASPK…NISRLALGLP (96 aa).

The protein belongs to the RecR family.

Its function is as follows. May play a role in DNA repair. It seems to be involved in an RecBC-independent recombinational process of DNA repair. It may act with RecF and RecO. The sequence is that of Recombination protein RecR from Chlamydia pneumoniae (Chlamydophila pneumoniae).